Reading from the N-terminus, the 125-residue chain is Secreted RxLR effector protein 55 (125 aa).

The N-terminal stretch at 1-21 (MAASRSSITTLLLLIVAVALG) is a signal peptide. Positions 35 to 38 (RQLR) match the RxLR motif. The segment covering 51 to 87 (ESATSSSSSSALDHKSSAPGEATNASETEHSAASTAS) has biased composition (low complexity). The interval 51–96 (ESATSSSSSSALDHKSSAPGEATNASETEHSAASTASEPKHEGPTM) is disordered. Asparagine 74 is a glycosylation site (N-linked (GlcNAc...) asparagine). The chain crosses the membrane as a helical span at residues 99–119 (FVGPAAAGVLAILLIGAVIAF).

This sequence belongs to the RxLR effector family.

Its subcellular location is the secreted. The protein resides in the host cell membrane. Its function is as follows. Effector that acts as a broad suppressor of cell death to interrupt plant immunity. Inhibits cell death induced by cell death-inducing proteins, including the PAMP elicitor INF1 from P.infestans. In Plasmopara viticola (Downy mildew of grapevine), this protein is Secreted RxLR effector protein 55.